We begin with the raw amino-acid sequence, 160 residues long: Cyclic pyranopterin monophosphate synthase (160 aa).

Substrate contacts are provided by residues Leu75 to His77 and Met113 to Glu114. The active site involves Asp128.

The protein belongs to the MoaC family. Homohexamer; trimer of dimers.

The catalysed reaction is (8S)-3',8-cyclo-7,8-dihydroguanosine 5'-triphosphate = cyclic pyranopterin phosphate + diphosphate. It functions in the pathway cofactor biosynthesis; molybdopterin biosynthesis. Functionally, catalyzes the conversion of (8S)-3',8-cyclo-7,8-dihydroguanosine 5'-triphosphate to cyclic pyranopterin monophosphate (cPMP). The chain is Cyclic pyranopterin monophosphate synthase from Beijerinckia indica subsp. indica (strain ATCC 9039 / DSM 1715 / NCIMB 8712).